A 253-amino-acid chain; its full sequence is DnaJ homolog subfamily C member 8 (253 aa).

At alanine 2 the chain carries N-acetylalanine. Residue serine 35 is modified to Phosphoserine. Positions asparagine 57–glutamine 124 constitute a J domain. At lysine 146 the chain carries N6-acetyllysine. Over residues glutamate 181–serine 222 the composition is skewed to basic and acidic residues. The segment at glutamate 181–glutamate 253 is disordered. 2 consecutive short sequence motifs (nuclear localization signal) follow at residues lysine 189–arginine 192 and lysine 203–arginine 206. The residue at position 222 (serine 222) is a Phosphoserine. The segment covering lysine 231–threonine 240 has biased composition (basic residues). Residues glycine 232–glutamate 253 are essential for polyglutamine aggregation suppression.

Interacts with SRPK1. Interacts with HSP70 (HSPA1A or HSPA1B).

The protein resides in the nucleus. In terms of biological role, suppresses polyglutamine (polyQ) aggregation of ATXN3 in neuronal cells. This chain is DnaJ homolog subfamily C member 8 (Dnajc8), found in Mus musculus (Mouse).